The primary structure comprises 131 residues: Aspartate 1-decarboxylase (131 aa).

Serine 25 acts as the Schiff-base intermediate with substrate; via pyruvic acid in catalysis. At serine 25 the chain carries Pyruvic acid (Ser). Substrate is bound at residue threonine 57. The active-site Proton donor is tyrosine 58. Substrate is bound at residue glycine 73–alanine 75.

The protein belongs to the PanD family. In terms of assembly, heterooctamer of four alpha and four beta subunits. Requires pyruvate as cofactor. Post-translationally, is synthesized initially as an inactive proenzyme, which is activated by self-cleavage at a specific serine bond to produce a beta-subunit with a hydroxyl group at its C-terminus and an alpha-subunit with a pyruvoyl group at its N-terminus.

The protein resides in the cytoplasm. The enzyme catalyses L-aspartate + H(+) = beta-alanine + CO2. It participates in cofactor biosynthesis; (R)-pantothenate biosynthesis; beta-alanine from L-aspartate: step 1/1. Catalyzes the pyruvoyl-dependent decarboxylation of aspartate to produce beta-alanine. This chain is Aspartate 1-decarboxylase, found in Leptothrix cholodnii (strain ATCC 51168 / LMG 8142 / SP-6) (Leptothrix discophora (strain SP-6)).